The chain runs to 171 residues: 3-hydroxydecanoyl-[acyl-carrier-protein] dehydratase (171 aa).

His-70 is a catalytic residue.

This sequence belongs to the thioester dehydratase family. FabA subfamily. Homodimer.

It is found in the cytoplasm. It carries out the reaction a (3R)-hydroxyacyl-[ACP] = a (2E)-enoyl-[ACP] + H2O. It catalyses the reaction (3R)-hydroxydecanoyl-[ACP] = (2E)-decenoyl-[ACP] + H2O. The enzyme catalyses (2E)-decenoyl-[ACP] = (3Z)-decenoyl-[ACP]. It participates in lipid metabolism; fatty acid biosynthesis. Functionally, necessary for the introduction of cis unsaturation into fatty acids. Catalyzes the dehydration of (3R)-3-hydroxydecanoyl-ACP to E-(2)-decenoyl-ACP and then its isomerization to Z-(3)-decenoyl-ACP. Can catalyze the dehydratase reaction for beta-hydroxyacyl-ACPs with saturated chain lengths up to 16:0, being most active on intermediate chain length. The polypeptide is 3-hydroxydecanoyl-[acyl-carrier-protein] dehydratase (Stenotrophomonas maltophilia (strain K279a)).